The sequence spans 473 residues: uncharacterized protein (473 aa).

The first 19 residues, 1-19 (MIRAFLVFPYLYILVQSNG), serve as a signal peptide directing secretion.

This is an uncharacterized protein from Methanocaldococcus jannaschii (strain ATCC 43067 / DSM 2661 / JAL-1 / JCM 10045 / NBRC 100440) (Methanococcus jannaschii).